The chain runs to 303 residues: Recombination-associated protein RdgC (303 aa).

Belongs to the RdgC family.

The protein resides in the cytoplasm. The protein localises to the nucleoid. In terms of biological role, may be involved in recombination. In Salmonella agona (strain SL483), this protein is Recombination-associated protein RdgC.